Reading from the N-terminus, the 61-residue chain is Large ribosomal subunit protein bL28 (61 aa).

Residues 1-24 (MAKDYVTGKKTTFGNKRSHSLNPT) are disordered. Polar residues predominate over residues 9–23 (KKTTFGNKRSHSLNP).

Belongs to the bacterial ribosomal protein bL28 family.

This is Large ribosomal subunit protein bL28 from Lactobacillus acidophilus (strain ATCC 700396 / NCK56 / N2 / NCFM).